The sequence spans 129 residues: ATP synthase epsilon chain (129 aa).

This sequence belongs to the ATPase epsilon chain family. F-type ATPases have 2 components, CF(1) - the catalytic core - and CF(0) - the membrane proton channel. CF(1) has five subunits: alpha(3), beta(3), gamma(1), delta(1), epsilon(1). CF(0) has three main subunits: a, b and c.

It localises to the cell inner membrane. Functionally, produces ATP from ADP in the presence of a proton gradient across the membrane. This chain is ATP synthase epsilon chain, found in Campylobacter fetus subsp. fetus (strain 82-40).